The following is a 286-amino-acid chain: Acyl-CoA thioesterase 2 (286 aa).

Active-site charge relay system residues include Asp-204, Thr-228, and Gln-278.

This sequence belongs to the C/M/P thioester hydrolase family. Homotetramer.

It carries out the reaction a fatty acyl-CoA + H2O = a fatty acid + CoA + H(+). Functionally, thioesterase that has relatively broad substrate specificity, hydrolyzing primarily medium- and long-chain acyl-CoA substrates to free fatty acids and CoA. The sequence is that of Acyl-CoA thioesterase 2 (tesB) from Haemophilus influenzae (strain ATCC 51907 / DSM 11121 / KW20 / Rd).